The chain runs to 603 residues: Proline--tRNA ligase (603 aa).

Belongs to the class-II aminoacyl-tRNA synthetase family. ProS type 1 subfamily. In terms of assembly, homodimer.

The protein resides in the cytoplasm. The enzyme catalyses tRNA(Pro) + L-proline + ATP = L-prolyl-tRNA(Pro) + AMP + diphosphate. Catalyzes the attachment of proline to tRNA(Pro) in a two-step reaction: proline is first activated by ATP to form Pro-AMP and then transferred to the acceptor end of tRNA(Pro). As ProRS can inadvertently accommodate and process non-cognate amino acids such as alanine and cysteine, to avoid such errors it has two additional distinct editing activities against alanine. One activity is designated as 'pretransfer' editing and involves the tRNA(Pro)-independent hydrolysis of activated Ala-AMP. The other activity is designated 'posttransfer' editing and involves deacylation of mischarged Ala-tRNA(Pro). The misacylated Cys-tRNA(Pro) is not edited by ProRS. In Arthrobacter sp. (strain FB24), this protein is Proline--tRNA ligase.